A 157-amino-acid chain; its full sequence is Arginine repressor (157 aa).

The protein belongs to the ArgR family.

The protein resides in the cytoplasm. It participates in amino-acid biosynthesis; L-arginine biosynthesis [regulation]. Regulates arginine biosynthesis genes. In Bacteroides fragilis (strain YCH46), this protein is Arginine repressor.